We begin with the raw amino-acid sequence, 429 residues long: Methylenetetrahydrofolate--tRNA-(uracil-5-)-methyltransferase TrmFO (429 aa).

FAD is bound at residue 7–12 (GAGLAG).

It belongs to the MnmG family. TrmFO subfamily. It depends on FAD as a cofactor.

The protein resides in the cytoplasm. It catalyses the reaction uridine(54) in tRNA + (6R)-5,10-methylene-5,6,7,8-tetrahydrofolate + NADH + H(+) = 5-methyluridine(54) in tRNA + (6S)-5,6,7,8-tetrahydrofolate + NAD(+). The catalysed reaction is uridine(54) in tRNA + (6R)-5,10-methylene-5,6,7,8-tetrahydrofolate + NADPH + H(+) = 5-methyluridine(54) in tRNA + (6S)-5,6,7,8-tetrahydrofolate + NADP(+). Functionally, catalyzes the folate-dependent formation of 5-methyl-uridine at position 54 (M-5-U54) in all tRNAs. In Thermosipho melanesiensis (strain DSM 12029 / CIP 104789 / BI429), this protein is Methylenetetrahydrofolate--tRNA-(uracil-5-)-methyltransferase TrmFO.